The chain runs to 685 residues: Amino acid transporter heavy chain SLC3A1 (685 aa).

Residues 1 to 11 (MAEDKSKRDSI) show a composition bias toward basic and acidic residues. The segment at 1–56 (MAEDKSKRDSIEMSMKGCQTNNGFVHNEDILEQTPDPGSSTDNLKHSTRGILGSQE) is disordered. Residues 1–87 (MAEDKSKRDS…GQARYRIPRE (87 aa)) are Cytoplasmic-facing. Ser10 carries the phosphoserine modification. A helical; Signal-anchor for type II membrane protein transmembrane segment spans residues 88 to 108 (ILFWLTVASVLVLIAATIAII). The Extracellular segment spans residues 109-685 (ALSPKCLDWW…SVLNILYTSC (577 aa)). Asn214 is a binding site for Ca(2+). N-linked (GlcNAc...) asparagine glycosylation is found at Asn214 and Asn261. A disulfide bond links Cys242 and Cys273. 4 residues coordinate Ca(2+): Asp284, Phe318, Leu319, and Glu321. Asn332, Asn495, Asn513, and Asn575 each carry an N-linked (GlcNAc...) asparagine glycan. 2 cysteine pairs are disulfide-bonded: Cys571-Cys666 and Cys673-Cys685.

In terms of assembly, disulfide-linked heterodimer composed of the catalytic light subunit SLC7A9 and the heavy subunit SLC3A1. The heterodimer is the minimal functional unit. Assembles in non-covalently linked heterotetramers (dimers of heterodimers) and higher order oligomers; the oligomerization is mediated by SLC3A1 likely to prevent degradation in the endoplasmic reticulum and facilitate heteromer trafficking to the plasma membrane. Disulfide-linked heterodimer composed of the catalytic light subunit SLC7A13 and the heavy subunit SLC3A1. In terms of tissue distribution, expressed in the brush border membrane in the kidney (at protein level). Predominantly expressed in the kidney, small intestine and pancreas. Weakly expressed in liver.

It is found in the cell membrane. It localises to the apical cell membrane. Acts as a chaperone that facilitates biogenesis and trafficking of functional transporter heteromers to the plasma membrane. Associates with SLC7A9 to form a functional transporter complex that mediates the electrogenic exchange between cationic amino acids and neutral amino acids, with a stoichiometry of 1:1. SLC7A9-SLC3A1 transporter has system b(0,+)-like activity with high affinity for extracellular cationic amino acids and L-cystine and lower affinity for intracellular neutral amino acids. Substrate exchange is driven by high concentration of intracellular neutral amino acids and the intracellular reduction of L-cystine to L-cysteine. SLC7A9-SLC3A1 acts as a major transporter for reabsorption of L-cystine and dibasic amino acids across the brush border membrane in early proximal tubules. Associates with SLC7A13 to form a functional complex that transports anionic and neutral amino acids via exchange or facilitated diffusion. SLC7A13-SLC3A1 may act as a major transporter for L-cystine in late proximal tubules, ensuring its reabsorption from the luminal fluid in exchange for cytosolic L-glutamate or L-aspartate. The chain is Amino acid transporter heavy chain SLC3A1 from Homo sapiens (Human).